Reading from the N-terminus, the 178-residue chain is MSVRKILRMGDSILRQVSIPVTENELQTKEFKKLIRDMFDTMRHAEGVGLAAPQIGILKQIVVVGSEDNERYPDTPNVPERVILNPIITPLTKDTSGFWEGCLSVPGMRGYVERPNKIRMQWMDEKGDRFDETIDGYKAVVYQHECDHLSGILYVDRLKDTKLFGFNDTLDSGRNVLD.

Cys102 and His144 together coordinate Fe cation. The active site involves Glu145. A Fe cation-binding site is contributed by His148.

Belongs to the polypeptide deformylase family. Fe(2+) is required as a cofactor.

The enzyme catalyses N-terminal N-formyl-L-methionyl-[peptide] + H2O = N-terminal L-methionyl-[peptide] + formate. Removes the formyl group from the N-terminal Met of newly synthesized proteins. Requires at least a dipeptide for an efficient rate of reaction. N-terminal L-methionine is a prerequisite for activity but the enzyme has broad specificity at other positions. The chain is Peptide deformylase from Leptospira borgpetersenii serovar Hardjo-bovis (strain JB197).